We begin with the raw amino-acid sequence, 683 residues long: ATP-dependent zinc metalloprotease FtsH (683 aa).

The disordered stretch occupies residues 1–43; sequence MEDKNIKDDEILDDQNDNQEDVQNQDEEKEIKPKKPKKKVYIS. At 1-70 the chain is on the cytoplasmic side; the sequence is MEDKNIKDDE…KNNNISFRVK (70 aa). Residues 10–28 are compositionally biased toward acidic residues; sequence EILDDQNDNQEDVQNQDEE. A helical transmembrane segment spans residues 71-91; it reads PPIFFFLILILMSTLFYFYGN. Topologically, residues 92–174 are periplasmic; that stretch reads KTALFQEKRE…IVVLGTPVSS (83 aa). The chain crosses the membrane as a helical span at residues 175–195; the sequence is IITRAIFSFAPLFMLLFFFYF. The Cytoplasmic portion of the chain corresponds to 196–683; that stretch reads INKKMMGSSG…LDDEQLEKYY (488 aa). 270 to 277 is a binding site for ATP; it reads GEPGTGKT. His494 serves as a coordination point for Zn(2+). Glu495 is a catalytic residue. Zn(2+) is bound by residues His498 and Asp569.

In the central section; belongs to the AAA ATPase family. The protein in the C-terminal section; belongs to the peptidase M41 family. Homohexamer. Zn(2+) is required as a cofactor.

The protein resides in the cell inner membrane. Functionally, acts as a processive, ATP-dependent zinc metallopeptidase for both cytoplasmic and membrane proteins. Plays a role in the quality control of integral membrane proteins. The protein is ATP-dependent zinc metalloprotease FtsH of Streptobacillus moniliformis (strain ATCC 14647 / DSM 12112 / NCTC 10651 / 9901).